A 149-amino-acid chain; its full sequence is Calmodulin-2 (149 aa).

N-acetylalanine is present on alanine 2. EF-hand domains lie at 8–43 (EQIAEFKEAFSLFDKDGDGTITTKELGTVMRSLGQN), 44–79 (PTEAELQDMINEVDADGNGTIDFPEFLTMMARKMKD), 81–116 (DSEEEIREAFRVFDKDGNGFISAAELRHVMTNLGEK), and 117–149 (LTDEEVDEMVREADIDGDGQVNYEEFVEMMTSK). The Ca(2+) site is built by aspartate 21, aspartate 23, aspartate 25, threonine 27, glutamate 32, aspartate 57, aspartate 59, asparagine 61, threonine 63, glutamate 68, aspartate 94, aspartate 96, asparagine 98, and glutamate 105. Residue lysine 116 is modified to N6,N6,N6-trimethyllysine. 5 residues coordinate Ca(2+): aspartate 130, aspartate 132, aspartate 134, glutamine 136, and glutamate 141.

The protein belongs to the calmodulin family.

Functionally, calmodulin mediates the control of a large number of enzymes, ion channels and other proteins by Ca(2+). Among the enzymes to be stimulated by the calmodulin-Ca(2+) complex are a number of protein kinases and phosphatases. This is Calmodulin-2 (CAM2) from Branchiostoma lanceolatum (Common lancelet).